The sequence spans 533 residues: Phospho-2-dehydro-3-deoxyheptonate aldolase 1, chloroplastic (533 aa).

A chloroplast-targeting transit peptide spans 1–57 (MALSTNSTTSSLLPKTPLVQQPLLKNASLPTTTKAIRFIQPISAIHSSDSSKNTPIV). Residues 47–56 (SSDSSKNTPI) show a composition bias toward polar residues. Positions 47-70 (SSDSSKNTPIVSAKPSSPPAATST) are disordered. Residues 57–70 (VSAKPSSPPAATST) are compositionally biased toward low complexity. C145 is a binding site for Mn(2+). Residues R184, 343 to 344 (ER), K366, and R397 contribute to the substrate site. Residues H429, E471, and D501 each contribute to the Mn(2+) site.

It belongs to the class-II DAHP synthase family. As to quaternary structure, homodimer. Requires Mn(2+) as cofactor. As to expression, mostly expressed in flowers, especially in petal limbs and tubes, and, to a lower extent, in roots, stems, stigmas, anthers, leaves and sepals.

It is found in the plastid. The protein localises to the chloroplast. The enzyme catalyses D-erythrose 4-phosphate + phosphoenolpyruvate + H2O = 7-phospho-2-dehydro-3-deoxy-D-arabino-heptonate + phosphate. Its pathway is metabolic intermediate biosynthesis; chorismate biosynthesis; chorismate from D-erythrose 4-phosphate and phosphoenolpyruvate: step 1/7. Functionally, involved in the production of volatile organic compounds (VOCs), including floral volatile benzenoids and phenylpropanoids (FVBP), in flowers of fragrant cultivars (e.g. cv. Mitchell and cv. V26), scent attracting pollinators (e.g. the night-active hawkmoth pollinator Manduca sexta). Catalyzes an aldol-like condensation reaction between phosphoenolpyruvate (PEP) and D-erythrose 4-phosphate (E4P) to generate 3-deoxy-D-arabino-heptulosonate 7-phosphate (DAH7P) and inorganic phosphate. This Petunia hybrida (Petunia) protein is Phospho-2-dehydro-3-deoxyheptonate aldolase 1, chloroplastic.